Here is a 305-residue protein sequence, read N- to C-terminus: Phospho-N-acetylmuramoyl-pentapeptide-transferase (305 aa).

Helical transmembrane passes span 1–21 (MLMV…RASK), 46–66 (AGGV…YLSG), 73–93 (ELLI…DDWL), 113–133 (FPLQ…LASH), 139–159 (LGPV…VNAF), 174–194 (IIVL…VAVL), 207–227 (VFMG…AYIL), 233–253 (LLPI…IQVI), and 282–302 (VTIR…WLLG).

Belongs to the glycosyltransferase 4 family. MraY subfamily. Requires Mg(2+) as cofactor.

It localises to the cell membrane. It catalyses the reaction UDP-N-acetyl-alpha-D-muramoyl-L-alanyl-gamma-D-glutamyl-meso-2,6-diaminopimeloyl-D-alanyl-D-alanine + di-trans,octa-cis-undecaprenyl phosphate = di-trans,octa-cis-undecaprenyl diphospho-N-acetyl-alpha-D-muramoyl-L-alanyl-D-glutamyl-meso-2,6-diaminopimeloyl-D-alanyl-D-alanine + UMP. The protein operates within cell wall biogenesis; peptidoglycan biosynthesis. In terms of biological role, catalyzes the initial step of the lipid cycle reactions in the biosynthesis of the cell wall peptidoglycan: transfers peptidoglycan precursor phospho-MurNAc-pentapeptide from UDP-MurNAc-pentapeptide onto the lipid carrier undecaprenyl phosphate, yielding undecaprenyl-pyrophosphoryl-MurNAc-pentapeptide, known as lipid I. This Deinococcus deserti (strain DSM 17065 / CIP 109153 / LMG 22923 / VCD115) protein is Phospho-N-acetylmuramoyl-pentapeptide-transferase.